The sequence spans 90 residues: Bombyxin B-6 (90 aa).

Positions 1-20 are cleaved as a signal peptide; the sequence is MMKTSVMFMLVVVISLMCSS. Cystine bridges form between Cys30–Cys76, Cys42–Cys89, and Cys75–Cys80. A propeptide spans 49-67 (c peptide like); sequence GVAQYAPYFWTRQYLGSRG.

This sequence belongs to the insulin family. In terms of assembly, heterodimer of a B chain and an A chain linked by two disulfide bonds.

Its subcellular location is the secreted. Functionally, brain peptide responsible for activation of prothoracic glands to produce ecdysone in insects. This Bombyx mori (Silk moth) protein is Bombyxin B-6 (BBXB6).